The chain runs to 335 residues: Transcriptional adapter 1 (335 aa).

Positions 83-103 are disordered; that stretch reads LPWPGGSAAKPGKPKGKKKLS. Residues 84–93 show a composition bias toward low complexity; the sequence is PWPGGSAAKP. Residues 94 to 103 are compositionally biased toward basic residues; it reads GKPKGKKKLS.

The protein belongs to the TADA1 family. As to quaternary structure, component of the STAGA transcription coactivator-HAT complex, at least composed of SUPT3H, GCN5L2, TAF5L, TAF6L, SUPT7L, TADA3L, TAD1L, TAF10, TAF12, TRRAP and TAF9.

It localises to the nucleus. Functionally, probably involved in transcriptional regulation. The sequence is that of Transcriptional adapter 1 (TADA1) from Homo sapiens (Human).